The following is a 262-amino-acid chain: Indole-3-glycerol phosphate synthase (262 aa).

This sequence belongs to the TrpC family.

It carries out the reaction 1-(2-carboxyphenylamino)-1-deoxy-D-ribulose 5-phosphate + H(+) = (1S,2R)-1-C-(indol-3-yl)glycerol 3-phosphate + CO2 + H2O. The protein operates within amino-acid biosynthesis; L-tryptophan biosynthesis; L-tryptophan from chorismate: step 4/5. The chain is Indole-3-glycerol phosphate synthase from Leuconostoc mesenteroides subsp. mesenteroides (strain ATCC 8293 / DSM 20343 / BCRC 11652 / CCM 1803 / JCM 6124 / NCDO 523 / NBRC 100496 / NCIMB 8023 / NCTC 12954 / NRRL B-1118 / 37Y).